The sequence spans 113 residues: DNA-directed RNA polymerase subunit omega (113 aa).

Belongs to the RNA polymerase subunit omega family. As to quaternary structure, the RNAP catalytic core consists of 2 alpha, 1 beta, 1 beta' and 1 omega subunit. When a sigma factor is associated with the core the holoenzyme is formed, which can initiate transcription.

It catalyses the reaction RNA(n) + a ribonucleoside 5'-triphosphate = RNA(n+1) + diphosphate. In terms of biological role, promotes RNA polymerase assembly. Latches the N- and C-terminal regions of the beta' subunit thereby facilitating its interaction with the beta and alpha subunits. This is DNA-directed RNA polymerase subunit omega from Rhizorhabdus wittichii (strain DSM 6014 / CCUG 31198 / JCM 15750 / NBRC 105917 / EY 4224 / RW1) (Sphingomonas wittichii).